The sequence spans 249 residues: Molybdate/tungstate transport system permease protein WtpB (249 aa).

The Cytoplasmic portion of the chain corresponds to 1 to 10 (MDRRDYLAYA). Residues 11-31 (FAGLGAFLVAFIGLPLFMIFI) traverse the membrane as a helical segment. Residues 32-56 (KQAYDLEALQRTLVDPLVIESIRNS) lie on the Extracellular side of the membrane. Residues 53–239 (IRNSLFTATV…TISLAVFIFL (187 aa)) form the ABC transmembrane type-1 domain. Residues 57-77 (LFTATVSTLLGILFGVPLGYV) traverse the membrane as a helical segment. Residues 78 to 96 (LARKEFKGKNFVQALIDTP) are Cytoplasmic-facing. A helical membrane pass occupies residues 97–117 (IVIPHSVVGIMLLVTFSDAIL). D118 is a topological domain (extracellular). The chain crosses the membrane as a helical span at residues 119 to 139 (NYKGIVAVMLFVSSPFIVNSA). The Cytoplasmic portion of the chain corresponds to 140–179 (RDGFLSVDEKLEYVARTLGASGLRTFFSVTLPNAIHSIAS). The chain crosses the membrane as a helical span at residues 180–200 (GAIMAWARAISEVGAILIVAY). Residues 201–223 (YPKTAQVLIMEYFNNYGLRASRP) lie on the Extracellular side of the membrane. The chain crosses the membrane as a helical span at residues 224-244 (IAVILVTISLAVFIFLRWLVG). The Cytoplasmic portion of the chain corresponds to 245 to 249 (RGRNA).

It belongs to the binding-protein-dependent transport system permease family. In terms of assembly, the complex is composed of two ATP-binding proteins (WtpC), two transmembrane proteins (WtpB) and a solute-binding protein (WtpA).

The protein localises to the cell membrane. Part of the ABC transporter complex WtpABC involved in molybdate/tungstate import. Probably responsible for the translocation of the substrate across the membrane. The polypeptide is Molybdate/tungstate transport system permease protein WtpB (Pyrococcus furiosus (strain ATCC 43587 / DSM 3638 / JCM 8422 / Vc1)).